Reading from the N-terminus, the 153-residue chain is Large ribosomal subunit protein uL23m (153 aa).

The disordered stretch occupies residues 131-153; the sequence is MADEQQRQGSDPQRGGVPNWFSL.

The protein belongs to the universal ribosomal protein uL23 family. As to quaternary structure, component of the mitochondrial ribosome large subunit (39S) which comprises a 16S rRNA and about 50 distinct proteins.

It localises to the mitochondrion. The sequence is that of Large ribosomal subunit protein uL23m (MRPL23) from Otolemur garnettii (Small-eared galago).